The following is a 956-amino-acid chain: RNA-silencing factor ers1 (956 aa).

The protein localises to the cytoplasm. It is found in the cytoskeleton. It localises to the microtubule organizing center. The protein resides in the spindle pole body. Its function is as follows. Involved in RNAi-dependent heterochromatin formation and centromeric silencing. Required for the conversion of centromeric pre-small interfering RNA transcripts into small interfering RNAs, histone H3 'Lys9' methylation, and the recruitment of the RITS complex to centromeric sequences. This chain is RNA-silencing factor ers1 (ers1), found in Schizosaccharomyces pombe (strain 972 / ATCC 24843) (Fission yeast).